A 78-amino-acid chain; its full sequence is Xibalbin-13 1 (78 aa).

An N-terminal signal peptide occupies residues 1-27 (MKEANTRRYIHLCLVVVLVSTIITTEA). Positions 28–31 (EDDR) are excised as a propeptide. 4 cysteine pairs are disulfide-bonded: Cys34/Cys49, Cys41/Cys54, Cys48/Cys65, and Cys56/Cys63. Ser76 bears the Serine amide mark.

This sequence belongs to the xibalbin-13 family. In terms of tissue distribution, expressed by the venom gland.

Its subcellular location is the secreted. Functionally, probable neurotoxin. Strongly inhibits voltage-gated potassium channels (Kv1.1/KCNA1, Kv1.2/KCNA2, Kv1.3/KCNA3, and Kv1.6/KCNA6) and mildly inhibits sodium channels (Nav1.2/SCN2A, Nav1.4/SCN4A, Nav1.5/SCN5A, Nav1.6/SCN8A, and BgNav). Induces activation of protein kinase A type II (PKA-II) and MAP kinase Erk1/2 in primary nociceptive and non-nociceptive sensory neurons. Does not show cytotoxic activity. Does not have an impact on Ca2+, cAMP, and NO signaling in the cell types analyzed. Does not interfere with the adhesion of leukocytes to endothelial cells. The sequence is that of Xibalbin-13 1 from Xibalbanus tulumensis (Blind cave remipede).